Here is a 334-residue protein sequence, read N- to C-terminus: MYKIAFDVMGSDLGSLTAIKAASEFIKEHNDLYLILVGDETEIKTALEQNPIDKNKYEILPTTQVIDMNGSILDIRRKKDASIIRTLELVRDQKVDGMLTAGNSAAFIGAAHFILGELNNIVRAGFMPTMPNAKNKLTLLLDVGANSENTPEDLINYAKMANIYYTEVLKNPNATVGLLNIGTEKSKGLELQKQTFKQLEKLKNINFVGNVESRDVLTGNVDIIVTDGYSGNICLKACEGAAKVLLTEIKKEITSSFIRKLAALVLKKSFKNVAAKFDYKNHAGAILLGVKGICFKSHGSSDVRSFKATLRMTLDAIKNNIVEKIEKGLIKNEY.

This sequence belongs to the PlsX family. In terms of assembly, homodimer. Probably interacts with PlsY.

The protein resides in the cytoplasm. The enzyme catalyses a fatty acyl-[ACP] + phosphate = an acyl phosphate + holo-[ACP]. It functions in the pathway lipid metabolism; phospholipid metabolism. Functionally, catalyzes the reversible formation of acyl-phosphate (acyl-PO(4)) from acyl-[acyl-carrier-protein] (acyl-ACP). This enzyme utilizes acyl-ACP as fatty acyl donor, but not acyl-CoA. This chain is Phosphate acyltransferase, found in Mycoplasma capricolum subsp. capricolum (strain California kid / ATCC 27343 / NCTC 10154).